A 161-amino-acid chain; its full sequence is Ribonuclease H (161 aa).

In terms of domain architecture, RNase H type-1 spans 3-144 (GLKQISIYTD…CDDLARQAAE (142 aa)). Positions 12, 50, 72, and 136 each coordinate Mg(2+). The interval 133–161 (ERCDDLARQAAEAKPSQEDSGYINQQAQA) is disordered. The span at 150 to 161 (EDSGYINQQAQA) shows a compositional bias: polar residues.

This sequence belongs to the RNase H family. Monomer. Requires Mg(2+) as cofactor.

It localises to the cytoplasm. The catalysed reaction is Endonucleolytic cleavage to 5'-phosphomonoester.. Functionally, endonuclease that specifically degrades the RNA of RNA-DNA hybrids. The protein is Ribonuclease H of Shewanella halifaxensis (strain HAW-EB4).